An 84-amino-acid chain; its full sequence is Delta-conotoxin-like MVIA (84 aa).

Residues 1 to 22 (MKLTCVMIVAVLFLTTWTFVTA) form the signal peptide. The propeptide occupies 23-49 (DDSRYGLKNLFPKARHEMKNPEASKLN). 3 disulfide bridges follow: Cys54–Cys69, Cys61–Cys73, and Cys68–Cys77. Pro65 is modified (4-hydroxyproline). Ser83 is modified (serine amide).

Belongs to the conotoxin O1 superfamily. In terms of tissue distribution, expressed by the venom duct.

It is found in the secreted. Its function is as follows. Delta-conotoxins bind to site 6 of voltage-gated sodium channels (Nav) and inhibit the inactivation process. In Conus magus (Magical cone), this protein is Delta-conotoxin-like MVIA.